A 424-amino-acid polypeptide reads, in one-letter code: Deoxyguanosinetriphosphate triphosphohydrolase-like protein (424 aa).

Positions 1-10 are enriched in pro residues; that stretch reads MEGTAPPTPY. The tract at residues 1–31 is disordered; that stretch reads MEGTAPPTPYDPASVARYAPEPDKRPGRTAF. Over residues 20 to 31 the composition is skewed to basic and acidic residues; sequence PEPDKRPGRTAF. Residues 70–220 enclose the HD domain; it reads RLTHSLECAQ…MDWADDVAYS (151 aa).

The protein belongs to the dGTPase family. Type 2 subfamily.

The chain is Deoxyguanosinetriphosphate triphosphohydrolase-like protein from Streptomyces coelicolor (strain ATCC BAA-471 / A3(2) / M145).